The primary structure comprises 500 residues: MIDKLSWIAVYPELVLLVMACLIALVDLGVKSPRRTLTYALTLLTLGAVAVMEASYALGGQTFYGFGNMVVVDPMGSWLKCFSSIALMITVVYGRPYAADRDMLRGGEFFTLSLFALLGMFVMISGHNFLVLYMGLELMTLCSYALVALRRDDAQATEAAMKYFVLGALASGFLLYGLSMLYGATGSLNINEVFNAIASRQVKHQVLVFGLVFIVAGLAFKLGAVPFHMWLPDVYQGAPTAVTLIIGGAPQLAAFAMTIRLLVEGLLPLAIDWQQMLALMAIGSLVIGNLAAVAQTNLKRMLAFSTISQMGFLLLGLLAGVVNGNQLHTESAYGAAMFYALTYVLTTLAAFGIILLLARAGHESEEITDLSGLNQRSPLYAGVMAMSMFSLAGLPPLVGFYAKLGVLQALISSGQTSYLVLAVFAVFMSLIGAFYYLRVIKVMYFDAPHSHNAQPISAPADAQIVLAINGALLLVLGIAPSSLMTLCAQSINSIVNSLGV.

A run of 14 helical transmembrane segments spans residues 6-26, 40-60, 69-89, 106-125, 129-151, 164-184, 207-227, 239-259, 276-296, 302-322, 337-357, 380-400, 417-437, and 464-484; these read SWIAVYPELVLLVMACLIALV, ALTLLTLGAVAVMEASYALGG, MVVVDPMGSWLKCFSSIALMI, GGEFFTLSLFALLGMFVMIS, FLVLYMGLELMTLCSYALVALRR, FVLGALASGFLLYGLSMLYGA, LVFGLVFIVAGLAFKLGAVPF, PTAVTLIIGGAPQLAAFAMTI, MLALMAIGSLVIGNLAAVAQT, LAFSTISQMGFLLLGLLAGVV, MFYALTYVLTTLAAFGIILLL, YAGVMAMSMFSLAGLPPLVGF, SYLVLAVFAVFMSLIGAFYYL, and IVLAINGALLLVLGIAPSSLM.

Belongs to the complex I subunit 2 family. NDH-1 is composed of 14 different subunits. Subunits NuoA, H, J, K, L, M, N constitute the membrane sector of the complex.

It is found in the cell inner membrane. The enzyme catalyses a quinone + NADH + 5 H(+)(in) = a quinol + NAD(+) + 4 H(+)(out). In terms of biological role, NDH-1 shuttles electrons from NADH, via FMN and iron-sulfur (Fe-S) centers, to quinones in the respiratory chain. The immediate electron acceptor for the enzyme in this species is believed to be ubiquinone. Couples the redox reaction to proton translocation (for every two electrons transferred, four hydrogen ions are translocated across the cytoplasmic membrane), and thus conserves the redox energy in a proton gradient. This Polaromonas naphthalenivorans (strain CJ2) protein is NADH-quinone oxidoreductase subunit N.